Reading from the N-terminus, the 937-residue chain is C-1-tetrahydrofolate synthase, cytoplasmic (937 aa).

The segment at 1–309 (MALLLEGTSL…TLLPLKLQTP (309 aa)) is methylenetetrahydrofolate dehydrogenase and cyclohydrolase. Residues 50-54 (YVRMK) and 97-99 (VQL) contribute to the substrate site. Residues 168–170 (GRS) and S193 contribute to the NADP(+) site. 268–272 (PGSVG) provides a ligand contact to substrate. Residues 310–937 (VPSDIEIARS…AENGDIVGLS (628 aa)) are formyltetrahydrofolate synthetase. ATP is bound at residue 374 to 381 (TPFGEGKS).

This sequence in the N-terminal section; belongs to the tetrahydrofolate dehydrogenase/cyclohydrolase family. It in the C-terminal section; belongs to the formate--tetrahydrofolate ligase family. Homodimer.

It is found in the cytoplasm. The enzyme catalyses (6R)-5,10-methylene-5,6,7,8-tetrahydrofolate + NADP(+) = (6R)-5,10-methenyltetrahydrofolate + NADPH. It carries out the reaction (6R)-5,10-methenyltetrahydrofolate + H2O = (6R)-10-formyltetrahydrofolate + H(+). The catalysed reaction is (6S)-5,6,7,8-tetrahydrofolate + formate + ATP = (6R)-10-formyltetrahydrofolate + ADP + phosphate. It functions in the pathway one-carbon metabolism; tetrahydrofolate interconversion. This is C-1-tetrahydrofolate synthase, cytoplasmic from Schizosaccharomyces pombe (strain 972 / ATCC 24843) (Fission yeast).